We begin with the raw amino-acid sequence, 351 residues long: Homeobox protein rough sheath 1 (351 aa).

Disordered regions lie at residues 1–23 (MDQS…NSKA), 57–82 (AAAP…GAEM), and 187–229 (GGGS…PRAE). Residues 57-68 (AAAPSSSQQHQQ) show a composition bias toward low complexity. A compositionally biased stretch (basic and acidic residues) spans 214 to 229 (PNGRENDPPEIDPRAE). Positions 232-252 (ELKYQLLKKYSGYLSSLRQEF) constitute an ELK domain. Residues 253 to 316 (SKKKKKGKLP…NQRKRHWKPS (64 aa)) constitute a DNA-binding region (homeobox; TALE-type).

It belongs to the TALE/KNOX homeobox family.

Its subcellular location is the nucleus. Its function is as follows. Plays a possible role in patterning the placement of lateral organs along the axis of the shoot. Mutations in RS1 alters cell fate and causes unregulated cell division and expansion in the leaf. Probably binds to the DNA sequence 5'-TGAC-3'. The protein is Homeobox protein rough sheath 1 (RS1) of Zea mays (Maize).